We begin with the raw amino-acid sequence, 215 residues long: UPF0502 protein YceH (215 aa).

Lysine 80 is modified (N6-acetyllysine).

Belongs to the UPF0502 family.

This chain is UPF0502 protein YceH, found in Escherichia coli (strain K12 / MC4100 / BW2952).